Here is a 1587-residue protein sequence, read N- to C-terminus: Sister chromatid cohesion protein mis4 (1587 aa).

The segment at 140–172 (PKEKPDASSINTNRSSSDNGFLTPSSSPRSPSC) is disordered. Residues 147–162 (SSINTNRSSSDNGFLT) are compositionally biased toward polar residues. Low complexity predominate over residues 163 to 172 (PSSSPRSPSC). Serine 183 carries the post-translational modification Phosphoserine. 6 HEAT repeats span residues 775–812 (LNLKFFVSLIIGFLDSPQASLRTKCLRIINQMKTIPSI), 814–851 (RTHPEVLAQIISKSNDQSAIVRDTVLDLLGTYIMAYRE), 853–888 (IPQIYGCIISGISDPSTIVRKRAIKQLCEVYEATED), 890–927 (NIRVDIASKLLTRSNDEEETISELSLEVLEKLWFSPAS), 1101–1140 (ATLMEIVPCLCSLFTRLNDYERLKKIVVSCLKSLEEARHS), and 1183–1220 (DAYVILLGYFQKLLKDAKGQLRIHIIDNMSRICLRETS).

The protein belongs to the SCC2/Nipped-B family. As to quaternary structure, interacts with ssl3.

The protein resides in the nucleus. It is found in the chromosome. In terms of biological role, plays a structural role in chromatin. Chromatid cohesion molecule required for equal sister chromatid separation in anaphase. May form a stable link between chromatids in S phase that is split rather than removed in anaphase. Also required for spindle-kinetochore interaction in early mitosis and inhibit sister chromatid separation until the cleavage of Rad21 in anaphase. The polypeptide is Sister chromatid cohesion protein mis4 (mis4) (Schizosaccharomyces pombe (strain 972 / ATCC 24843) (Fission yeast)).